Here is a 432-residue protein sequence, read N- to C-terminus: Gamma-glutamyl phosphate reductase (432 aa).

The protein belongs to the gamma-glutamyl phosphate reductase family.

The protein localises to the cytoplasm. It catalyses the reaction L-glutamate 5-semialdehyde + phosphate + NADP(+) = L-glutamyl 5-phosphate + NADPH + H(+). It functions in the pathway amino-acid biosynthesis; L-proline biosynthesis; L-glutamate 5-semialdehyde from L-glutamate: step 2/2. In terms of biological role, catalyzes the NADPH-dependent reduction of L-glutamate 5-phosphate into L-glutamate 5-semialdehyde and phosphate. The product spontaneously undergoes cyclization to form 1-pyrroline-5-carboxylate. This Brachyspira hyodysenteriae (strain ATCC 49526 / WA1) protein is Gamma-glutamyl phosphate reductase.